Here is a 300-residue protein sequence, read N- to C-terminus: NAD kinase (300 aa).

Catalysis depends on aspartate 77, which acts as the Proton acceptor. NAD(+)-binding positions include 77–78 (DG), 151–152 (ND), histidine 162, arginine 179, aspartate 181, and 192–197 (TAYSLS).

The protein belongs to the NAD kinase family. A divalent metal cation is required as a cofactor.

Its subcellular location is the cytoplasm. The enzyme catalyses NAD(+) + ATP = ADP + NADP(+) + H(+). Involved in the regulation of the intracellular balance of NAD and NADP, and is a key enzyme in the biosynthesis of NADP. Catalyzes specifically the phosphorylation on 2'-hydroxyl of the adenosine moiety of NAD to yield NADP. This is NAD kinase from Cellvibrio japonicus (strain Ueda107) (Pseudomonas fluorescens subsp. cellulosa).